A 410-amino-acid chain; its full sequence is MQNKLASGARLGRQALLFPLCLVLYEFSTYIGNDMIQPGMLAVVEQYQAGIDWVPTSMTAYLAGGMFLQWLLGPLSDRIGRRPVMLAGVVWFIVTCLAILLAQNIEQFTLLRFLQGISLCFIGAVGYAAIQESFEEAVCIKITALMANVALIAPLLGPLVGAAWIHVLPWEGMFVLFAALAAISFFGLQRAMPETATRIGEKLSLKELGRDYKLVLKNGRFVAGALALGFVSLPLLAWIAQSPIIIITGEQLSSYEYGLLQVPIFGALIAGNLLLARLTSRRTVRSLIIMGGWPIMIGLLVAAAATVISSHAYLWMTAGLSIYAFGIGLANAGLVRLTLFASDMSKGTVSAAMGMLQMLIFTVGIEISKHAWLNGGNGLFNLFNLVNGILWLSLMVIFLKDKQMGNSHEG.

At Met1–Ala15 the chain is on the cytoplasmic side. A helical membrane pass occupies residues Leu16–Ile36. The Periplasmic portion of the chain corresponds to Gln37–Asp52. A helical membrane pass occupies residues Trp53–Gly73. Over Pro74–Arg82 the chain is Cytoplasmic. Residues Pro83–Gln103 traverse the membrane as a helical segment. The Periplasmic segment spans residues Asn104–Thr109. The helical transmembrane segment at Leu110–Ile130 threads the bilayer. Topologically, residues Gln131–Ala144 are cytoplasmic. A helical membrane pass occupies residues Leu145–Ile165. His166 is a topological domain (periplasmic). A helical membrane pass occupies residues Val167–Gly187. Residues Leu188–Leu226 are Cytoplasmic-facing. A helical transmembrane segment spans residues Ala227 to Ile247. Residues Thr248 to Tyr255 are Periplasmic-facing. A helical transmembrane segment spans residues Glu256–Ala276. At Arg277–Leu287 the chain is on the cytoplasmic side. The chain crosses the membrane as a helical span at residues Ile288–Ile308. At Ser309 to Leu314 the chain is on the periplasmic side. A helical transmembrane segment spans residues Trp315–Val335. At Arg336–Lys346 the chain is on the cytoplasmic side. A helical membrane pass occupies residues Gly347–Ile367. Topologically, residues Ser368–Gly378 are periplasmic. The chain crosses the membrane as a helical span at residues Leu379–Leu399. Residues Lys400 to Gly410 are Cytoplasmic-facing.

The protein belongs to the major facilitator superfamily. MdfA family. As to quaternary structure, monomer.

Its subcellular location is the cell inner membrane. Efflux pump driven by the proton motive force. Confers resistance to a broad spectrum of chemically unrelated drugs. The polypeptide is Multidrug transporter MdfA (mdfA) (Escherichia coli O6:H1 (strain CFT073 / ATCC 700928 / UPEC)).